Consider the following 1465-residue polypeptide: DNA polymerase III PolC-type (1465 aa).

The region spanning 425 to 581 (YVVFDVETTG…YDAEATGRLL (157 aa)) is the Exonuclease domain.

This sequence belongs to the DNA polymerase type-C family. PolC subfamily.

It is found in the cytoplasm. The enzyme catalyses DNA(n) + a 2'-deoxyribonucleoside 5'-triphosphate = DNA(n+1) + diphosphate. Its function is as follows. Required for replicative DNA synthesis. This DNA polymerase also exhibits 3' to 5' exonuclease activity. In Streptococcus mutans serotype c (strain ATCC 700610 / UA159), this protein is DNA polymerase III PolC-type.